The sequence spans 337 residues: 1,4-dihydroxy-2-naphthoyl-CoA synthase, peroxisomal (337 aa).

Substrate contacts are provided by residues 97-98 (RR), lysine 133, 137-141 (SGGDQ), 181-185 (YAVGG), threonine 207, and serine 213. 206 to 208 (QTG) lines the hydrogencarbonate pocket.

This sequence belongs to the enoyl-CoA hydratase/isomerase family. MenB subfamily. In terms of assembly, homohexamer. Hydrogencarbonate is required as a cofactor.

The protein resides in the peroxisome. It catalyses the reaction 2-succinylbenzoyl-CoA + H(+) = 1,4-dihydroxy-2-naphthoyl-CoA + H2O. Functionally, involved in the biosynthesis of phylloquinone (vitamin K1). Converts o-succinylbenzoyl-CoA (OSB-CoA) to 1,4-dihydroxy-2-naphthoyl-CoA (DHNA-CoA). This Arabidopsis thaliana (Mouse-ear cress) protein is 1,4-dihydroxy-2-naphthoyl-CoA synthase, peroxisomal (MENB).